A 49-amino-acid chain; its full sequence is uncharacterized protein (49 aa).

Residues 8 to 28 (FFLFSSGVLQATTLLLVILIF) traverse the membrane as a helical segment.

It localises to the cell membrane. This is an uncharacterized protein from Bacillus subtilis (strain 168).